Consider the following 204-residue polypeptide: MPYIPMPYVVEQTHRGERSYDIYSRLLKDRIVFLGTPIDDDVANVVIAQLLFLESEDPDKDISLYINSPGGSVTSGLAIYDTMQYVKPQVSTICLGQAASMGAFLLAGGAAGKRFAVPNARIMIHQPMGGFQGQATDIDIQAREILRLKAKLNDILAKHTKQPLERIEKDTDRDYFMGAGEAKEYGLIDEVIVHKPKATEKKAQ.

Catalysis depends on S100, which acts as the Nucleophile. Residue H125 is part of the active site.

It belongs to the peptidase S14 family. Fourteen ClpP subunits assemble into 2 heptameric rings which stack back to back to give a disk-like structure with a central cavity, resembling the structure of eukaryotic proteasomes.

It localises to the cytoplasm. It catalyses the reaction Hydrolysis of proteins to small peptides in the presence of ATP and magnesium. alpha-casein is the usual test substrate. In the absence of ATP, only oligopeptides shorter than five residues are hydrolyzed (such as succinyl-Leu-Tyr-|-NHMec, and Leu-Tyr-Leu-|-Tyr-Trp, in which cleavage of the -Tyr-|-Leu- and -Tyr-|-Trp bonds also occurs).. In terms of biological role, cleaves peptides in various proteins in a process that requires ATP hydrolysis. Has a chymotrypsin-like activity. Plays a major role in the degradation of misfolded proteins. This is ATP-dependent Clp protease proteolytic subunit from Anaeromyxobacter sp. (strain Fw109-5).